We begin with the raw amino-acid sequence, 339 residues long: Trace amine-associated receptor 2 (339 aa).

Over 1-36 the chain is Extracellular; it reads MASFEAQQETFDCSEYGNGSCPENERSLGVRAAMYS. N-linked (GlcNAc...) asparagine glycosylation is present at asparagine 18. Disulfide bonds link cysteine 21–cysteine 185 and cysteine 104–cysteine 189. Residues 37–57 form a helical membrane-spanning segment; it reads LMACAIFITIFGNLAMIISIS. The Cytoplasmic segment spans residues 58-67; that stretch reads YFKQLHTPTN. A helical membrane pass occupies residues 68–88; sequence LLILSMAVTDFLLGFTIMPYS. The Extracellular portion of the chain corresponds to 89-106; it reads MVRSVENCWYFGLTFCKI. A helical transmembrane segment spans residues 107 to 127; it reads HYSFDLMLSITSIFHLCSVAV. The Cytoplasmic portion of the chain corresponds to 128-150; sequence DRFYAICHPLHYCTKMTIPVVRR. A helical transmembrane segment spans residues 151-171; it reads LLLVCWSVPGAFAFGVVFSEA. Residues 172–195 are Extracellular-facing; sequence YADGIEGYDILVACSSSCPVMFNK. A helical transmembrane segment spans residues 196–216; it reads LWGTTLFVAGFFTPSSMMVGI. At 217-251 the chain is on the cytoplasmic side; sequence YGKIFAVSKKHARVIDNLPENQNNQMRKDKKAAKT. A helical transmembrane segment spans residues 252–272; it reads LGIVMGVFLLCWFPCFFTILL. Over 273 to 287 the chain is Extracellular; the sequence is DPFLNFSTPAVLFDA. An N-linked (GlcNAc...) asparagine glycan is attached at asparagine 277. A helical transmembrane segment spans residues 288-310; sequence LTWFGYFNSTCNPLIYGFFYPWF. At 311–339 the chain is on the cytoplasmic side; that stretch reads RRALKYILLGKIFSSHFHNTNLFTQKETE.

This sequence belongs to the G-protein coupled receptor 1 family. As to expression, mainly expressed in neurons of the olfactory epithelium. Also present in the limbic brain areas receiving projection from the olfactory system and several brain regions, including the hippocampus, cerebellum, cortex, raphe nuclei, hypothalamus and habenula.

The protein localises to the cell membrane. Orphan olfactory receptor specific for trace amines. Trace amine compounds are enriched in animal body fluids and act on trace amine-associated receptors (TAARs) to elicit both intraspecific and interspecific innate behaviors. Ligand-binding causes a conformation change that triggers signaling via the G(s)-class of G-proteins which activate adenylate cyclase. May also be required to provide olfactory input into limbic brain areas to regulate emotional behaviors likely via modulation of the dopamine system. The protein is Trace amine-associated receptor 2 of Mus musculus (Mouse).